A 42-amino-acid chain; its full sequence is Packaging protein P20 (42 aa).

The helical transmembrane segment at 11–31 threads the bilayer; that stretch reads INWLIVILMLTIAGMAATLVC.

As to quaternary structure, heterodimer of P20 and P22; further multimerizes as hexamers of heterodimers. Part of the dodecameric portal complex that is composed of the packaging efficiency factor P6, the DNA packaging ATPase P9, and the internal heterododecamer P20/P22 which spans the virion inner membrane.

Its subcellular location is the virion membrane. Together with P22, forms the internal part of the portal complex embeded in the virion internal membrane and which plays critical roles in genome packaging and genome ejection. Both proteins multimerize as a single ring-shaped heterdodecamer arranged around a central channel and interact with the P6/P9 external part of the portal. The polypeptide is Packaging protein P20 (XX) (Acinetobacter calcoaceticus (Arthrobacter siderocapsulatus)).